Here is a 336-residue protein sequence, read N- to C-terminus: Ultraviolet-sensitive opsin (336 aa).

Over 1–29 (MDAWTYQFGNLSKISPFEGPQYHLAPKWA) the chain is Extracellular. Asparagine 10 carries an N-linked (GlcNAc...) asparagine glycan. The chain crosses the membrane as a helical span at residues 30-54 (FYLQAAFMGFVFFVGTPLNAIVLFV). Residues 55-66 (TMKYKKLRQPLN) lie on the Cytoplasmic side of the membrane. The chain crosses the membrane as a helical span at residues 67 to 91 (YILVNISLGGFIFDTFSVSQVFFSA). The Extracellular segment spans residues 92–106 (LRGYYFFGYTLCAME). Cysteine 103 and cysteine 180 are oxidised to a cystine. The helical transmembrane segment at 107-126 (AAMGSIAGLVTGWSLAVLAF) threads the bilayer. Residues 127-145 (ERYVVICKPFGSFKFGQSQ) lie on the Cytoplasmic side of the membrane. Residues 146–169 (ALGAVALTWIIGIGCATPPFWGWS) traverse the membrane as a helical segment. Over 170–195 (RYIPEGIGTACGPDWYTKNEEYNTES) the chain is Extracellular. The helical transmembrane segment at 196-223 (YTYFLLVSCFMMPIMIITFSYSQLLGAL) threads the bilayer. The Cytoplasmic segment spans residues 224 to 245 (RAVAAQQAESASTQKAEKEVSR). A helical membrane pass occupies residues 246–269 (MVVVMVGSFVVCYGPYAITALYFS). Residues 270–277 (YAEDSNKD) are Extracellular-facing. The chain crosses the membrane as a helical span at residues 278–302 (YRLVAIPSLFSKSSCVYNPLIYAFM). Lysine 289 is modified (N6-(retinylidene)lysine). The Cytoplasmic portion of the chain corresponds to 303 to 336 (NKQFNACIMETVFGKKIDESSEVSSKTETSSVSA).

It belongs to the G-protein coupled receptor 1 family. Opsin subfamily. Phosphorylated on some or all of the serine and threonine residues present in the C-terminal region.

The protein resides in the membrane. Its function is as follows. Visual pigments are the light-absorbing molecules that mediate vision. They consist of an apoprotein, opsin, covalently linked to cis-retinal. This is Ultraviolet-sensitive opsin from Carassius auratus (Goldfish).